The following is a 190-amino-acid chain: Crossover junction endodeoxyribonuclease RuvC (190 aa).

Active-site residues include Asp8, Glu67, and Asp139. Residues Asp8, Glu67, and Asp139 each contribute to the Mg(2+) site.

It belongs to the RuvC family. Homodimer which binds Holliday junction (HJ) DNA. The HJ becomes 2-fold symmetrical on binding to RuvC with unstacked arms; it has a different conformation from HJ DNA in complex with RuvA. In the full resolvosome a probable DNA-RuvA(4)-RuvB(12)-RuvC(2) complex forms which resolves the HJ. Mg(2+) serves as cofactor.

It localises to the cytoplasm. It carries out the reaction Endonucleolytic cleavage at a junction such as a reciprocal single-stranded crossover between two homologous DNA duplexes (Holliday junction).. Its function is as follows. The RuvA-RuvB-RuvC complex processes Holliday junction (HJ) DNA during genetic recombination and DNA repair. Endonuclease that resolves HJ intermediates. Cleaves cruciform DNA by making single-stranded nicks across the HJ at symmetrical positions within the homologous arms, yielding a 5'-phosphate and a 3'-hydroxyl group; requires a central core of homology in the junction. The consensus cleavage sequence is 5'-(A/T)TT(C/G)-3'. Cleavage occurs on the 3'-side of the TT dinucleotide at the point of strand exchange. HJ branch migration catalyzed by RuvA-RuvB allows RuvC to scan DNA until it finds its consensus sequence, where it cleaves and resolves the cruciform DNA. The protein is Crossover junction endodeoxyribonuclease RuvC of Haemophilus influenzae (strain ATCC 51907 / DSM 11121 / KW20 / Rd).